A 319-amino-acid polypeptide reads, in one-letter code: MGTSFFLGNYWLFFSVYLLVFLVGLPLNVMALVVFVGKLRRRPVAVDLLLLNLTISDLLLLLFLPFRMVEAACGMRWLLPFIFCPLSGFLFFTTIYLTSLFLTAVSIERFLSVAYPLWYKTRPRLAQAGLVSVVCWFLASAHCSVVYITEYWGNATYSQGTNGTCYLEFREDQLAILLPVRLEMAVVLFMVPLCITSYCYSRLVWILSRGASRRRRKRIMGLLAATLLIFFVCFGPYNMSHVVGYVSRESPSWRSYVLLLSTLNSCIDPLVFYFSSSKFQADFHQLLGRLLRTCVPWTQQVSLELKVKNGEEPSKECPS.

The Extracellular portion of the chain corresponds to 1–15 (MGTSFFLGNYWLFFS). A helical membrane pass occupies residues 16-36 (VYLLVFLVGLPLNVMALVVFV). Residues 37–43 (GKLRRRP) are Cytoplasmic-facing. The chain crosses the membrane as a helical span at residues 44–64 (VAVDLLLLNLTISDLLLLLFL). Over 65-98 (PFRMVEAACGMRWLLPFIFCPLSGFLFFTTIYLT) the chain is Extracellular. The cysteines at positions 84 and 165 are disulfide-linked. A helical membrane pass occupies residues 99–119 (SLFLTAVSIERFLSVAYPLWY). Residues 120–127 (KTRPRLAQ) lie on the Cytoplasmic side of the membrane. The chain crosses the membrane as a helical span at residues 128–148 (AGLVSVVCWFLASAHCSVVYI). Residues 149–183 (TEYWGNATYSQGTNGTCYLEFREDQLAILLPVRLE) are Extracellular-facing. N-linked (GlcNAc...) asparagine glycosylation is found at N154 and N162. A helical transmembrane segment spans residues 184 to 206 (MAVVLFMVPLCITSYCYSRLVWI). The Cytoplasmic segment spans residues 207–218 (LSRGASRRRRKR). Residues 219 to 239 (IMGLLAATLLIFFVCFGPYNM) traverse the membrane as a helical segment. Over 240-254 (SHVVGYVSRESPSWR) the chain is Extracellular. The chain crosses the membrane as a helical span at residues 255 to 275 (SYVLLLSTLNSCIDPLVFYFS). Residues 276 to 319 (SSKFQADFHQLLGRLLRTCVPWTQQVSLELKVKNGEEPSKECPS) lie on the Cytoplasmic side of the membrane.

This sequence belongs to the G-protein coupled receptor 1 family. Expressed in white adipose tissue and skeletal muscle (at protein level). Abundantly expressed in sympathetic ganglia such as the superior cervical ganglion. Also expressed by intestinal endocrine cells.

The protein localises to the cell membrane. Its function is as follows. G protein-coupled receptor that is activated by a major product of dietary fiber digestion, the short chain fatty acids (SCFAs), and that plays a role in the regulation of whole-body energy homeostasis and in intestinal immunity. In omnivorous mammals, the short chain fatty acids acetate, propionate and butyrate are produced primarily by the gut microbiome that metabolizes dietary fibers. SCFAs serve as a source of energy but also act as signaling molecules. That G protein-coupled receptor is probably coupled to the pertussis toxin-sensitive, G(i/o)-alpha family of G proteins. Its activation results in the formation of inositol 1,4,5-trisphosphate, the mobilization of intracellular calcium, the phosphorylation of the MAPK3/ERK1 and MAPK1/ERK2 kinases and the inhibition of intracellular cAMP accumulation. Activated by SCFAs and by beta-hydroxybutyrate, a ketone body produced by the liver upon starvation, it inhibits N-type calcium channels and modulates the activity of sympathetic neurons through a signaling cascade involving the beta and gamma subunits of its coupled G protein, phospholipase C and MAP kinases. Thereby, it may regulate energy expenditure through the control of the sympathetic nervous system that controls for instance heart rate. Upon activation by SCFAs accumulating in the intestine, it may also signal to the brain via neural circuits which in turn would regulate intestinal gluconeogenesis. May also control the production of hormones involved in whole-body energy homeostasis. May for instance, regulate blood pressure through renin secretion. May also regulate secretion of the PYY peptide by enteroendocrine cells and control gut motility, intestinal transit rate, and the harvesting of energy from SCFAs produced by gut microbiota. May also indirectly regulate the production of LEP/Leptin, a hormone acting on the CNS to inhibit food intake, in response to the presence of short-chain fatty acids in the intestine. Finally, may also play a role in glucose homeostasis. Besides its role in energy homeostasis, may play a role in intestinal immunity. May mediate the activation of the inflammatory and immune response by SCFAs in the gut, regulating the rapid production of chemokines and cytokines by intestinal epithelial cells. Exhibits an SCFA-independent constitutive G protein-coupled receptor activity. The sequence is that of Free fatty acid receptor 3 (Ffar3) from Mus musculus (Mouse).